A 210-amino-acid chain; its full sequence is Imidazole glycerol phosphate synthase subunit HisH 1 (210 aa).

Positions 3–210 (KIAIVDYGMC…LDNFLSFSNV (208 aa)) constitute a Glutamine amidotransferase type-1 domain. The active-site Nucleophile is the Cys-82. Residues His-189 and Glu-191 contribute to the active site.

As to quaternary structure, heterodimer of HisH and HisF.

It localises to the cytoplasm. It carries out the reaction 5-[(5-phospho-1-deoxy-D-ribulos-1-ylimino)methylamino]-1-(5-phospho-beta-D-ribosyl)imidazole-4-carboxamide + L-glutamine = D-erythro-1-(imidazol-4-yl)glycerol 3-phosphate + 5-amino-1-(5-phospho-beta-D-ribosyl)imidazole-4-carboxamide + L-glutamate + H(+). It catalyses the reaction L-glutamine + H2O = L-glutamate + NH4(+). It participates in amino-acid biosynthesis; L-histidine biosynthesis; L-histidine from 5-phospho-alpha-D-ribose 1-diphosphate: step 5/9. IGPS catalyzes the conversion of PRFAR and glutamine to IGP, AICAR and glutamate. The HisH subunit provides the glutamine amidotransferase activity that produces the ammonia necessary to HisF for the synthesis of IGP and AICAR. This is Imidazole glycerol phosphate synthase subunit HisH 1 (hisH1) from Parasynechococcus marenigrum (strain WH8102).